Consider the following 59-residue polypeptide: Small EDRK-rich factor 2 (59 aa).

2 stretches are compositionally biased toward basic and acidic residues: residues 1 to 30 (MTRG…RDDG) and 50 to 59 (KANEKKEEPK). The interval 1 to 59 (MTRGNQRELARQKNMKKQSDSVKGKRRDDGLSAAARKQRDSEIMQQKQKKANEKKEEPK) is disordered.

The protein belongs to the SERF family.

In terms of biological role, positive regulator of amyloid protein aggregation and proteotoxicity. Induces conformational changes in amyloid proteins, such as HTT, driving them into compact formations preceding the formation of aggregates. The polypeptide is Small EDRK-rich factor 2 (SERF2) (Plecturocebus moloch (Dusky titi monkey)).